The following is a 141-amino-acid chain: UPF0310 protein SGO_1818 (141 aa).

The protein belongs to the UPF0310 family.

This Streptococcus gordonii (strain Challis / ATCC 35105 / BCRC 15272 / CH1 / DL1 / V288) protein is UPF0310 protein SGO_1818.